A 386-amino-acid polypeptide reads, in one-letter code: G2/mitotic-specific cyclin-B2 (386 aa).

A disordered region spans residues 45–64; it reads TNGKVGPSKKPSKASCAQKP.

It belongs to the cyclin family. Cyclin AB subfamily. Interacts with the CDK1 protein kinase to form a serine/threonine kinase holoenzyme complex also known as maturation promoting factor (MPF). The cyclin subunit imparts substrate specificity to the complex.

Functionally, essential for the control of the cell cycle at the G2/M (mitosis) transition. The polypeptide is G2/mitotic-specific cyclin-B2 (ccnb2) (Oryzias luzonensis (Luzon ricefish)).